A 446-amino-acid polypeptide reads, in one-letter code: Histidine--tRNA ligase (446 aa).

This sequence belongs to the class-II aminoacyl-tRNA synthetase family. Homodimer.

It is found in the cytoplasm. It carries out the reaction tRNA(His) + L-histidine + ATP = L-histidyl-tRNA(His) + AMP + diphosphate + H(+). The polypeptide is Histidine--tRNA ligase (Burkholderia ambifaria (strain MC40-6)).